A 312-amino-acid polypeptide reads, in one-letter code: Telomere-binding protein OPG077 (312 aa).

The protein belongs to the orthopoxvirus OPG077 family.

Its subcellular location is the virion. Its function is as follows. DNA-binding protein which binds to the hairpin form of the viral telomeric sequence. Required for the production of mature virions (MV). In Monkeypox virus, this protein is Telomere-binding protein OPG077 (OPG077).